A 370-amino-acid polypeptide reads, in one-letter code: DNA replication and repair protein RecF (370 aa).

30-37 contacts ATP; that stretch reads GENAQGKT.

This sequence belongs to the RecF family.

Its subcellular location is the cytoplasm. The RecF protein is involved in DNA metabolism; it is required for DNA replication and normal SOS inducibility. RecF binds preferentially to single-stranded, linear DNA. It also seems to bind ATP. The polypeptide is DNA replication and repair protein RecF (Listeria monocytogenes serotype 4b (strain CLIP80459)).